A 395-amino-acid chain; its full sequence is uncharacterized protein (395 aa).

The next 7 helical transmembrane spans lie at 42 to 62, 67 to 87, 97 to 117, 128 to 148, 196 to 216, 241 to 261, and 281 to 301; these read LKYV…LIFI, LYSF…FVLL, LIFN…LIIF, ILST…SIIP, FIYA…LYIL, ILFY…SFVA, and LFFS…GTVV.

The protein localises to the cell membrane. This is an uncharacterized protein from Mycoplasma genitalium (strain ATCC 33530 / DSM 19775 / NCTC 10195 / G37) (Mycoplasmoides genitalium).